Consider the following 289-residue polypeptide: Lipoyl synthase 2 (289 aa).

[4Fe-4S] cluster is bound by residues cysteine 43, cysteine 48, cysteine 54, cysteine 69, cysteine 73, cysteine 76, and serine 282. One can recognise a Radical SAM core domain in the interval 55-271; that stretch reads YAQKTATFLL…GAVARDLGFA (217 aa).

The protein belongs to the radical SAM superfamily. Lipoyl synthase family. [4Fe-4S] cluster is required as a cofactor.

It localises to the cytoplasm. It catalyses the reaction [[Fe-S] cluster scaffold protein carrying a second [4Fe-4S](2+) cluster] + N(6)-octanoyl-L-lysyl-[protein] + 2 oxidized [2Fe-2S]-[ferredoxin] + 2 S-adenosyl-L-methionine + 4 H(+) = [[Fe-S] cluster scaffold protein] + N(6)-[(R)-dihydrolipoyl]-L-lysyl-[protein] + 4 Fe(3+) + 2 hydrogen sulfide + 2 5'-deoxyadenosine + 2 L-methionine + 2 reduced [2Fe-2S]-[ferredoxin]. It functions in the pathway protein modification; protein lipoylation via endogenous pathway; protein N(6)-(lipoyl)lysine from octanoyl-[acyl-carrier-protein]: step 2/2. Functionally, catalyzes the radical-mediated insertion of two sulfur atoms into the C-6 and C-8 positions of the octanoyl moiety bound to the lipoyl domains of lipoate-dependent enzymes, thereby converting the octanoylated domains into lipoylated derivatives. In Gloeobacter violaceus (strain ATCC 29082 / PCC 7421), this protein is Lipoyl synthase 2.